The sequence spans 644 residues: MFQDNPLLAQLKQQLHSQTPRAEGVVKATEKGFGFLEVDAQKSYFIPPPQMKKVMHGDRIIAVIHSEKERESAEPEELVEPFLTRFVGKVQGKNDRLAIVPDHPLLKDAIPCRAARGLNHEFKEGDWAVAEMRRHPLKGDRSFYAELTQYITFGDDHFVPWWVTLARHNLEKEAPDGVATEMLDEGLVREDLTALDFVTIDSASTEDMDDALFAKALPDDKLQLIVAIADPTAWIAEGSKLDKAAKIRAFTNYLPGFNIPMLPRELSDDLCSLRANEVRPVLACRMTLSADGTIEDNIEFFAATIESKAKLVYDQVSDWLENTGDWKPESEAIAEQVRLLAQICQRRGEWRHNHALVFKDRPDYRFILGEKGEVLDIVAEPRRIANRIVEEAMIAANICAARVLRDKLGFGIYNVHMGFDPANADALAALLKTHGLHVDAEEVLTLDGFCKLRRELDAQPTGFLDSRIRRFQSFAEISTEPGPHFGLGLEAYATWTSPIRKYGDMINHRLLKAVIKGETATRPQDEITVQMAERRRLNRMAERDVGDWLYARFLKDKAGTDTRFAAEIVDISRGGMRVRLVDNGAIAFIPAPFLHAVRDEMVCSQENGTVQIKGETVYKVTDVIDVTIAEVRMETRSIIARPVA.

Residues Arg189–Lys516 enclose the RNB domain. Residues Asp561–Val643 enclose the S1 motif domain.

This sequence belongs to the RNR ribonuclease family. RNase II subfamily.

Its subcellular location is the cytoplasm. The enzyme catalyses Exonucleolytic cleavage in the 3'- to 5'-direction to yield nucleoside 5'-phosphates.. In terms of biological role, involved in mRNA degradation. Hydrolyzes single-stranded polyribonucleotides processively in the 3' to 5' direction. The chain is Exoribonuclease 2 from Escherichia coli (strain ATCC 8739 / DSM 1576 / NBRC 3972 / NCIMB 8545 / WDCM 00012 / Crooks).